Here is a 164-residue protein sequence, read N- to C-terminus: MMEEVGTAGNNLGATEIDHDEQNTFLRICRTGSIYELMEVTPFFGGDRHLLHRYDRHGRQCIHTVAWHDRANAVMKIEILMQSGVNINAKELGTGNTLLHIAASTGNYLLADWFCQQLGVDLGASNNQQETAYYIAYKMRDRKMMKLLRAHGVAYNNTLSAGLL.

ANK repeat units follow at residues 57–89 (HGRQ…NINA), 94–124 (TGNT…DLGA), and 128–157 (QQET…AYNN).

It belongs to the polydnaviridae I-Kappa-B-like protein family.

Its function is as follows. Suppresses the host immune response through NF-kappa-B inactivation. Possesses ankyrin repeat domains required for NF-kappa-B binding but lacks the regulatory regions required for dissociation from NF-kappa-B and degradation. Therefore, prevents host NF-kappa-B release and subsequent activation. This Microplitis demolitor bracovirus (isolate Webb) (MdBV) protein is I-Kappa-B like protein F1 (F2).